We begin with the raw amino-acid sequence, 1412 residues long: Protein MODIFIER OF SNC1 1 (1412 aa).

Disordered regions lie at residues 1-276 (MTSS…QSYP), 384-437 (GYGS…TQRP), 472-798 (QQMQ…KQKQ), 827-888 (NEGV…DESI), 909-1144 (DIKV…WNDG), and 1156-1412 (AEEM…GDRN). A compositionally biased stretch (polar residues) spans 56-103 (SWGSKSSLNAWGTSSLSPRTESGPGSPSHLSNRPSSGGSVTRPSTADS). Ser72 bears the Phosphoserine mark. Low complexity predominate over residues 109 to 119 (SSSSVAWDSNS). Polar residues predominate over residues 120-135 (RPSSASGVFPSNQPSV). 2 stretches are compositionally biased toward basic and acidic residues: residues 197 to 207 (AEKDTSEKSTR) and 236 to 267 (ANDR…EGQL). Residues 478-488 (RNERREIRNDA) show a composition bias toward basic and acidic residues. 4 stretches are compositionally biased toward polar residues: residues 517–531 (KTRT…SSVV), 539–553 (QPRT…NKVS), 565–581 (SKNS…TNKN), and 610–639 (RIVN…TNTE). Positions 665-713 (DPKDNQRSTMRELARQRAQQRQKEEEERARDQRAKALAKLEELNRRSQI) are enriched in basic and acidic residues. Positions 667–717 (KDNQRSTMRELARQRAQQRQKEEEERARDQRAKALAKLEELNRRSQIYEEG) form a coiled coil. Composition is skewed to polar residues over residues 738–749 (GSHSSNATNSVE), 756–779 (KNTT…QQDN), and 829–847 (GVSS…SAES). The span at 850-862 (PKRKNNRNGKKKH) shows a compositional bias: basic residues. Residues 877–888 (VGKETKSGDESI) are compositionally biased toward basic and acidic residues. Phosphoserine is present on Ser883. Polar residues-rich tracts occupy residues 914-938 (GDSS…NWKS) and 983-1003 (QTTV…QTSS). Residues 1006–1023 (KRVEIERYVPKPIVKEMA) show a composition bias toward basic and acidic residues. The segment covering 1056 to 1070 (LQPSGSTAGKSGSPS) has biased composition (polar residues). Residues 1071-1084 (KSRHGNGRQGKHGR) are compositionally biased toward basic residues. Positions 1106–1137 (FVTSNQPIRGTVNYHSSKQTEQIAAKDQTTCN) are enriched in polar residues. Composition is skewed to basic and acidic residues over residues 1191-1202 (DPKKGNKRDFNK), 1222-1232 (KEGRVPGDHVW), and 1242-1251 (GGRESTRDKP). Composition is skewed to polar residues over residues 1266-1286 (GFTT…QNRS) and 1293-1307 (VEQN…NTGQ). Composition is skewed to basic and acidic residues over residues 1338 to 1351 (SNRD…HYEY) and 1359 to 1369 (YDGERSREQSK). A compositionally biased stretch (low complexity) spans 1384 to 1397 (QGQQRQGGYQQQRG). Residues 1400–1412 (GRNGGHGFTGDRN) show a composition bias toward gly residues.

In terms of assembly, interacts with TCP14 and TCP15.

Its function is as follows. Involved in the regulation of the chromatin structure and DNA methylation at the SNC1 locus. Regulates the expression of SNC1 at chromatin level. The polypeptide is Protein MODIFIER OF SNC1 1 (MOS1) (Arabidopsis thaliana (Mouse-ear cress)).